The following is a 310-amino-acid chain: tRNA-cytidine(32) 2-sulfurtransferase (310 aa).

A PP-loop motif motif is present at residues Ser-48–Ser-53. [4Fe-4S] cluster-binding residues include Cys-123, Cys-126, and Cys-214.

The protein belongs to the TtcA family. In terms of assembly, homodimer. Mg(2+) serves as cofactor. The cofactor is [4Fe-4S] cluster.

The protein localises to the cytoplasm. It carries out the reaction cytidine(32) in tRNA + S-sulfanyl-L-cysteinyl-[cysteine desulfurase] + AH2 + ATP = 2-thiocytidine(32) in tRNA + L-cysteinyl-[cysteine desulfurase] + A + AMP + diphosphate + H(+). The protein operates within tRNA modification. Functionally, catalyzes the ATP-dependent 2-thiolation of cytidine in position 32 of tRNA, to form 2-thiocytidine (s(2)C32). The sulfur atoms are provided by the cysteine/cysteine desulfurase (IscS) system. The protein is tRNA-cytidine(32) 2-sulfurtransferase of Vibrio cholerae serotype O1 (strain ATCC 39541 / Classical Ogawa 395 / O395).